The primary structure comprises 350 residues: UDP-3-O-acylglucosamine N-acyltransferase (350 aa).

Catalysis depends on His-244, which acts as the Proton acceptor.

The protein belongs to the transferase hexapeptide repeat family. LpxD subfamily. In terms of assembly, homotrimer.

The catalysed reaction is a UDP-3-O-[(3R)-3-hydroxyacyl]-alpha-D-glucosamine + a (3R)-hydroxyacyl-[ACP] = a UDP-2-N,3-O-bis[(3R)-3-hydroxyacyl]-alpha-D-glucosamine + holo-[ACP] + H(+). It functions in the pathway bacterial outer membrane biogenesis; LPS lipid A biosynthesis. Its function is as follows. Catalyzes the N-acylation of UDP-3-O-acylglucosamine using 3-hydroxyacyl-ACP as the acyl donor. Is involved in the biosynthesis of lipid A, a phosphorylated glycolipid that anchors the lipopolysaccharide to the outer membrane of the cell. The protein is UDP-3-O-acylglucosamine N-acyltransferase of Janthinobacterium sp. (strain Marseille) (Minibacterium massiliensis).